A 298-amino-acid polypeptide reads, in one-letter code: Ketohexokinase (298 aa).

Asp15, Gly41, Asn42, and Asn45 together coordinate beta-D-fructose. Residues Arg108, 226 to 229, and 255 to 258 each bind ATP; these read AEEG and GAGD. Beta-D-fructose is bound at residue Asp258.

It belongs to the carbohydrate kinase PfkB family. In terms of assembly, homodimer. As to expression, most abundant in liver, kidney, gut, spleen and pancreas. Low levels also found in adrenal, muscle, brain and eye.

It catalyses the reaction beta-D-fructose + ATP = beta-D-fructose 1-phosphate + ADP + H(+). Its pathway is carbohydrate metabolism; fructose metabolism. Its activity is regulated as follows. Requires potassium. Inhibition by ADP. Functionally, catalyzes the phosphorylation of the ketose sugar fructose to fructose-1-phosphate. The chain is Ketohexokinase from Homo sapiens (Human).